The following is a 364-amino-acid chain: Aminomethyltransferase (364 aa).

Belongs to the GcvT family. As to quaternary structure, the glycine cleavage system is composed of four proteins: P, T, L and H.

It carries out the reaction N(6)-[(R)-S(8)-aminomethyldihydrolipoyl]-L-lysyl-[protein] + (6S)-5,6,7,8-tetrahydrofolate = N(6)-[(R)-dihydrolipoyl]-L-lysyl-[protein] + (6R)-5,10-methylene-5,6,7,8-tetrahydrofolate + NH4(+). Its function is as follows. The glycine cleavage system catalyzes the degradation of glycine. The chain is Aminomethyltransferase from Shewanella denitrificans (strain OS217 / ATCC BAA-1090 / DSM 15013).